The sequence spans 437 residues: Immunoglobulin superfamily member 11 (437 aa).

A signal peptide spans 1 to 22 (MTCRGSPLAPLLLFSLHGVAAS). Residues 23–136 (LEVSESPGSV…DRGGRNIGVT (114 aa)) form the Ig-like V-type domain. At 23–241 (LEVSESPGSV…VISPQPRSIG (219 aa)) the chain is on the extracellular side. 2 cysteine pairs are disulfide-bonded: Cys44–Cys120 and Cys165–Cys215. The N-linked (GlcNAc...) asparagine glycan is linked to Asn102. Positions 144-234 (PSAPHCQIQG…TCLLDLQVIS (91 aa)) constitute an Ig-like C2-type domain. Residues 242 to 262 (LIAGAIGTGAVIIIFCIALIL) form a helical membrane-spanning segment. The Cytoplasmic portion of the chain corresponds to 263-437 (GAFFYWRSKN…PAQSRAGSLV (175 aa)). Arg379 bears the Omega-N-methylarginine mark. The segment at 382 to 405 (SLPAVSRSNGSVSRKARPPPVPSL) is disordered.

N-glycosylated.

Its subcellular location is the cell membrane. Its function is as follows. Functions as a cell adhesion molecule through homophilic interaction. Stimulates cell growth. The chain is Immunoglobulin superfamily member 11 (IGSF11) from Bos taurus (Bovine).